We begin with the raw amino-acid sequence, 382 residues long: uncharacterized protein (382 aa).

The next 12 membrane-spanning stretches (helical) occupy residues 14–34, 45–65, 79–99, 102–122, 131–151, 157–177, 204–224, 235–255, 270–290, 291–311, 325–345, and 348–368; these read GLLL…LWLA, VVSS…GYVI, FIFA…SWLA, FVAG…LMCS, LLAA…LLVS, LMSV…PLLF, LGVN…GLMP, ASIG…QWPI, VQVF…AMAP, ALFI…AWAC, ALLL…AMLM, and FSDN…LLML.

The protein belongs to the major facilitator superfamily. YcaD (TC 2.A.1.26) family.

It localises to the cell inner membrane. This is an uncharacterized protein from Escherichia coli O6:K15:H31 (strain 536 / UPEC).